The primary structure comprises 473 residues: Hyaluronidase-2 (473 aa).

The first 20 residues, 1 to 20 (MRAGLGPIITLALVLEVAWA), serve as a signal peptide directing secretion. 2 disulfides stabilise this stretch: C47–C340 and C211–C227. Residues N74 and N103 are each glycosylated (N-linked (GlcNAc...) asparagine). E135 acts as the Proton donor in catalysis. An N-linked (GlcNAc...) asparagine glycan is attached at N357. One can recognise an EGF-like domain in the interval 361-439 (ATQYCSWTQC…YLGWGGEQCQ (79 aa)). 3 cysteine pairs are disulfide-bonded: C365–C376, C370–C427, and C429–C438. D448 carries the GPI-anchor amidated aspartate lipid modification. Positions 449–473 (ASRAWAGAHLASLLGLVAMTLTWTL) are cleaved as a propeptide — removed in mature form.

The protein belongs to the glycosyl hydrolase 56 family. As to quaternary structure, interacts with MST1R.

It localises to the cell membrane. The enzyme catalyses Random hydrolysis of (1-&gt;4)-linkages between N-acetyl-beta-D-glucosamine and D-glucuronate residues in hyaluronate.. Functionally, catalyzes hyaluronan degradation into small fragments that are endocytosed and degraded in lysosomes by HYAL1 and exoglycosidases. Essential for the breakdown of extracellular matrix hyaluronan. This chain is Hyaluronidase-2 (Hyal2), found in Rattus norvegicus (Rat).